A 151-amino-acid polypeptide reads, in one-letter code: FAD synthase (151 aa).

ATP contacts are provided by residues 21-22, 26-29, and aspartate 104; these read TF and HPGH.

This sequence belongs to the archaeal FAD synthase family. As to quaternary structure, homodimer. The cofactor is a divalent metal cation.

The catalysed reaction is FMN + ATP + H(+) = FAD + diphosphate. Its pathway is cofactor biosynthesis; FAD biosynthesis; FAD from FMN: step 1/1. Functionally, catalyzes the transfer of the AMP portion of ATP to flavin mononucleotide (FMN) to produce flavin adenine dinucleotide (FAD) coenzyme. The protein is FAD synthase of Methanosarcina acetivorans (strain ATCC 35395 / DSM 2834 / JCM 12185 / C2A).